The chain runs to 209 residues: Glutathione S-transferase D1 (209 aa).

The region spanning 1–81 (MVDFYYLPGS…YLVEKYGKTD (81 aa)) is the GST N-terminal domain. Glutathione is bound by residues serine 10, 51-53 (HTI), and 65-67 (ESR). The region spanning 87 to 208 (CPKKRAVINQ…AGCLEFKKYF (122 aa)) is the GST C-terminal domain.

The protein belongs to the GST superfamily. Delta family. In terms of assembly, homodimer.

It carries out the reaction RX + glutathione = an S-substituted glutathione + a halide anion + H(+). The catalysed reaction is 1,1,1-trichloro-2,2-bis(4-chlorophenyl)ethane = 1,1-dichloro-2,2-bis(4-chlorophenyl)ethylene + chloride + H(+). Its function is as follows. Conjugation of reduced glutathione to a wide number of exogenous and endogenous hydrophobic electrophiles. Has DDT dehydrochlorinase activity. May be involved in detoxification. This chain is Glutathione S-transferase D1, found in Drosophila melanogaster (Fruit fly).